Reading from the N-terminus, the 349-residue chain is Histidinol-phosphate aminotransferase (349 aa).

Position 210 is an N6-(pyridoxal phosphate)lysine (Lys210).

Belongs to the class-II pyridoxal-phosphate-dependent aminotransferase family. Histidinol-phosphate aminotransferase subfamily. As to quaternary structure, homodimer. Pyridoxal 5'-phosphate is required as a cofactor.

It catalyses the reaction L-histidinol phosphate + 2-oxoglutarate = 3-(imidazol-4-yl)-2-oxopropyl phosphate + L-glutamate. Its pathway is amino-acid biosynthesis; L-histidine biosynthesis; L-histidine from 5-phospho-alpha-D-ribose 1-diphosphate: step 7/9. The polypeptide is Histidinol-phosphate aminotransferase (Flavobacterium johnsoniae (strain ATCC 17061 / DSM 2064 / JCM 8514 / BCRC 14874 / CCUG 350202 / NBRC 14942 / NCIMB 11054 / UW101) (Cytophaga johnsonae)).